The following is a 629-amino-acid chain: Protein fem-1 homolog B (629 aa).

ANK repeat units lie at residues 47–77 (QRSTPLIIAARNGHSKVVRLLLEHYKVDVQQ), 89–118 (DGATALWCAAGAGHYEVVKLLVSHEANVNH), 122–151 (TNSTPLRAACFDGRLDIVRFLVENNANISI), 155–184 (YDNTCLMIAAYKGHSDVVHYLLRQHADPNA), 188–217 (CGATALHFAAEAGHLDIVRELVKWKAAMVV), and 220–250 (HGMTPLKVAAESCKADVVELLLAHSDCDAKS). Residues 346–379 (SHPIIYRGAVYADNMQFEQCIKLWLHALQLRQKG) form a TPR repeat. ANK repeat units lie at residues 485 to 529 (EGGS…NVNA) and 533 to 570 (MGNSPLHVIVQYNRPISDFLTLHAIIISLVEAGAHTDM).

The protein belongs to the fem-1 family. Component of a CRL2 E3 ubiquitin-protein ligase complex, also named ECS (Elongin BC-CUL2/5-SOCS-box protein) complex.

It localises to the cytoplasm. The protein localises to the nucleus. The protein operates within protein modification; protein ubiquitination. Its function is as follows. Substrate-recognition component of a Cul2-RING (CRL2) E3 ubiquitin-protein ligase complex of the DesCEND (destruction via C-end degrons) pathway, which recognizes a C-degron located at the extreme C terminus of target proteins, leading to their ubiquitination and degradation. The C-degron recognized by the DesCEND pathway is usually a motif of less than ten residues and can be present in full-length proteins, truncated proteins or proteolytically cleaved forms. The CRL2(FEM1B) complex specifically recognizes proteins ending with -Gly-Leu-Asp-Arg, leading to their ubiquitination and degradation. This is Protein fem-1 homolog B from Xenopus laevis (African clawed frog).